Consider the following 843-residue polypeptide: DNA gyrase subunit A (843 aa).

Residues L61–L528 form the Topo IIA-type catalytic domain. The active-site O-(5'-phospho-DNA)-tyrosine intermediate is Y149. The GyrA-box signature appears at Q555–G561.

This sequence belongs to the type II topoisomerase GyrA/ParC subunit family. In terms of assembly, heterotetramer, composed of two GyrA and two GyrB chains. In the heterotetramer, GyrA contains the active site tyrosine that forms a transient covalent intermediate with DNA, while GyrB binds cofactors and catalyzes ATP hydrolysis.

The protein resides in the cytoplasm. It carries out the reaction ATP-dependent breakage, passage and rejoining of double-stranded DNA.. Its function is as follows. A type II topoisomerase that negatively supercoils closed circular double-stranded (ds) DNA in an ATP-dependent manner to modulate DNA topology and maintain chromosomes in an underwound state. Negative supercoiling favors strand separation, and DNA replication, transcription, recombination and repair, all of which involve strand separation. Also able to catalyze the interconversion of other topological isomers of dsDNA rings, including catenanes and knotted rings. Type II topoisomerases break and join 2 DNA strands simultaneously in an ATP-dependent manner. The chain is DNA gyrase subunit A from Leptospira biflexa serovar Patoc (strain Patoc 1 / Ames).